The following is a 200-amino-acid chain: Mediator of RNA polymerase II transcription subunit 22 (200 aa).

Residues 93–122 are a coiled coil; it reads SVNEAIDQRNQQLRALQEECDRKLITLRDE. Positions 167–200 are disordered; that stretch reads SAPLLASPETGAGPLQSAAPVHSHGGGPGPTEHT. Residues 190–200 are compositionally biased toward gly residues; sequence HGGGPGPTEHT.

It belongs to the Mediator complex subunit 22 family. In terms of assembly, component of the Mediator complex, which is composed of MED1, MED4, MED6, MED7, MED8, MED9, MED10, MED11, MED12, MED13, MED13L, MED14, MED15, MED16, MED17, MED18, MED19, MED20, MED21, MED22, MED23, MED24, MED25, MED26, MED27, MED29, MED30, MED31, CCNC, CDK8 and CDC2L6/CDK11. The MED12, MED13, CCNC and CDK8 subunits form a distinct module termed the CDK8 module. Mediator containing the CDK8 module is less active than Mediator lacking this module in supporting transcriptional activation. Individual preparations of the Mediator complex lacking one or more distinct subunits have been variously termed ARC, CRSP, DRIP, PC2, SMCC and TRAP.

It localises to the nucleus. Functionally, component of the Mediator complex, a coactivator involved in the regulated transcription of nearly all RNA polymerase II-dependent genes. Mediator functions as a bridge to convey information from gene-specific regulatory proteins to the basal RNA polymerase II transcription machinery. Mediator is recruited to promoters by direct interactions with regulatory proteins and serves as a scaffold for the assembly of a functional preinitiation complex with RNA polymerase II and the general transcription factors. The polypeptide is Mediator of RNA polymerase II transcription subunit 22 (Med22) (Rattus norvegicus (Rat)).